A 949-amino-acid chain; its full sequence is Syndetin (949 aa).

Positions 1 to 28 are disordered; the sequence is MQKIKSLMTRQGLRSPQESVHDLSPIEN. Residues 8–18 are compositionally biased toward polar residues; the sequence is MTRQGLRSPQE. Coiled coils occupy residues 82–104 and 198–226; these read SLQE…LERV and YSCI…LSKI. The tract at residues 509 to 581 is disordered; the sequence is FEIQADSKDD…ETLRSRKKSD (73 aa). Over residues 569–581 the composition is skewed to basic and acidic residues; sequence VSRETLRSRKKSD.

The protein belongs to the syndetin family. In terms of assembly, component of the endosome-associated retrograde protein (EARP) complex.

It localises to the recycling endosome. The protein resides in the membrane. In terms of biological role, acts as a component of the EARP complex that is involved in endocytic recycling. The EARP complex associates with Rab4-positive endosomes and promotes recycling of internalized transferrin receptor (TFRC) to the plasma membrane. This Gallus gallus (Chicken) protein is Syndetin.